We begin with the raw amino-acid sequence, 124 residues long: Fluoride-specific ion channel FluC (124 aa).

4 consecutive transmembrane segments (helical) span residues I4–G24, A32–M52, G68–F88, and L101–A121. Residues G75 and T78 each contribute to the Na(+) site.

Belongs to the fluoride channel Fluc/FEX (TC 1.A.43) family.

Its subcellular location is the cell inner membrane. It catalyses the reaction fluoride(in) = fluoride(out). With respect to regulation, na(+) is not transported, but it plays an essential structural role and its presence is essential for fluoride channel function. Its function is as follows. Fluoride-specific ion channel. Important for reducing fluoride concentration in the cell, thus reducing its toxicity. The polypeptide is Fluoride-specific ion channel FluC (Geobacter sulfurreducens (strain ATCC 51573 / DSM 12127 / PCA)).